Reading from the N-terminus, the 530-residue chain is Copine-D (530 aa).

C2 domains lie at 1 to 122 (MNPI…RMKM) and 130 to 248 (LSGS…EFEI). Asp25, Asp31, Asp85, Asp87, and Asp100 together coordinate Ca(2+). In terms of domain architecture, VWFA spans 289–507 (NLMVAIDCTA…ALAHETLKEI (219 aa)).

The protein belongs to the copine family. Ca(2+) is required as a cofactor.

The polypeptide is Copine-D (cpnD) (Dictyostelium discoideum (Social amoeba)).